The primary structure comprises 488 residues: Cobyric acid synthase (488 aa).

Positions 250 to 438 constitute a GATase cobBQ-type domain; that stretch reads DITIAIIRLP…LHGIFDNGSW (189 aa). Catalysis depends on Cys331, which acts as the Nucleophile. The active site involves His430.

This sequence belongs to the CobB/CobQ family. CobQ subfamily.

The protein operates within cofactor biosynthesis; adenosylcobalamin biosynthesis. Its function is as follows. Catalyzes amidations at positions B, D, E, and G on adenosylcobyrinic A,C-diamide. NH(2) groups are provided by glutamine, and one molecule of ATP is hydrogenolyzed for each amidation. In Trichodesmium erythraeum (strain IMS101), this protein is Cobyric acid synthase.